The chain runs to 1307 residues: Light-sensor Protein kinase (1307 aa).

Positions 215 to 394 constitute a GAF domain; it reads DIELLCDTIV…VFGMQLNLHV (180 aa). A phytochromobilin-binding site is contributed by cysteine 320. Residues 609-680 form the PAS domain; it reads LANEMSRVLE…RLLSLALQGE (72 aa). The 57-residue stretch at 683-739 folds into the PAC domain; the sequence is QNVEIKLKTFGTQTTERAVILIVNACCSRDASDFVVGVFFVGQDVTEQRMFMDRFTR. Residues 779-1003 are hinge; the sequence is DHATGSVERL…WSFSEKFFQW (225 aa). The 304-residue stretch at 1004-1307 folds into the Protein kinase domain; it reads IQITGSLGSG…DSYPSTEEPS (304 aa). ATP-binding positions include 1010-1018 and lysine 1031; that span reads LGSGSSATV. Residue aspartate 1127 is part of the active site.

This sequence in the N-terminal section; belongs to the phytochrome family. It in the C-terminal section; belongs to the protein kinase superfamily. Ser/Thr protein kinase family. In terms of assembly, homodimer. In terms of processing, contains one covalently linked phytochromobilin chromophore.

The protein localises to the cell membrane. It catalyses the reaction L-seryl-[protein] + ATP = O-phospho-L-seryl-[protein] + ADP + H(+). The catalysed reaction is L-threonyl-[protein] + ATP = O-phospho-L-threonyl-[protein] + ADP + H(+). Functionally, regulatory photoreceptor which exists in two forms that are reversibly interconvertible by light: the Pr form that absorbs maximally in the red region of the spectrum and the Pfr form that absorbs maximally in the far-red region. Photoconversion of Pr to Pfr induces an array of morphogenic responses, whereas reconversion of Pfr to Pr cancels the induction of those responses. Pfr controls the expression of a number of nuclear genes including those encoding the small subunit of ribulose-bisphosphate carboxylase, chlorophyll A/B binding protein, protochlorophyllide reductase, rRNA, etc. It also controls the expression of its own gene(s) in a negative feedback fashion. The polypeptide is Light-sensor Protein kinase (PHY1) (Ceratodon purpureus (Fire moss)).